The sequence spans 129 residues: Tumor necrosis factor receptor superfamily member 12A (129 aa).

The N-terminal stretch at 1–27 (MASAWPRSLPQILVLGFGLVLMRAAAG) is a signal peptide. At 28 to 80 (EQAPGTSPCSSGSSWSADLDKCMDCASCPARPHSDFCLGCAAAPPAHFRLLWP) the chain is on the extracellular side. 3 disulfide bridges follow: C36–C49, C52–C67, and C55–C64. One copy of the TNFR-Cys; atypical repeat lies at 36–67 (CSSGSSWSADLDKCMDCASCPARPHSDFCLGC). The helical transmembrane segment at 81–101 (ILGGALSLVLVLALVSSFLVW) threads the bilayer. Over 102–129 (RRCRRREKFTTPIEETGGEGCPGVALIQ) the chain is Cytoplasmic.

In terms of assembly, associates with TRAF1 and TRAF2, and probably also with TRAF3. As to expression, highly expressed in fetal heart, intestine, kidney, liver, lung and skin, and in adult heart and ovary. Intermediate expression in adult kidney, lung and skin.

It is found in the membrane. Receptor for TNFSF12/TWEAK. Weak inducer of apoptosis in some cell types. Promotes angiogenesis and the proliferation of endothelial cells. May modulate cellular adhesion to matrix proteins. The sequence is that of Tumor necrosis factor receptor superfamily member 12A (Tnfrsf12a) from Mus musculus (Mouse).